A 355-amino-acid polypeptide reads, in one-letter code: Mu-like prophage FluMu protein gp47 (355 aa).

This sequence belongs to the Mu gp47/PBSX XkdT family.

In Haemophilus influenzae (strain ATCC 51907 / DSM 11121 / KW20 / Rd), this protein is Mu-like prophage FluMu protein gp47.